A 452-amino-acid chain; its full sequence is Keratin, type I cytoskeletal 42 (452 aa).

The tract at residues 4–93 (TTSVRQFSTS…GVSDALLGGS (90 aa)) is head. Residues 94-129 (EKETMQNLNDRLATYLDRVRALEEANADLEVKIREW) are coil 1A. The region spanning 94 to 405 (EKETMQNLND…RLLEGEDAHL (312 aa)) is the IF rod domain. Residues 130-147 (YKKQGPGPARDYSPYFKT) form a linker 1 region. A coil 1B region spans residues 148–239 (IEDLRNKILA…KNHEEEMNAL (92 aa)). The segment at 240 to 262 (RGQVGGDVNVEMDAAPGVDLSRI) is linker 12. The segment at 263–401 (LNEMRDQYEK…ATYRRLLEGE (139 aa)) is coil 2. The interval 402–452 (DAHLATQYSSSLASQPSREGMVTSRQVRTIVEEVQDGKVVSSREQVHRSTH) is tail.

This sequence belongs to the intermediate filament family. Heterodimer of a type I and a type II keratin. Colocalizes with KRT8/KRT18 filament network. In terms of tissue distribution, expressed in nail matrix and nail bed epithelium (at protein level). Also expressed in tongue and digits with weak expression in vibrissae and in both filiform and fungiform papillae of oral mucosa.

The protein resides in the cytoplasm. The protein is Keratin, type I cytoskeletal 42 of Mus musculus (Mouse).